Reading from the N-terminus, the 248-residue chain is Adenosylcobinamide-GDP ribazoletransferase (248 aa).

The next 6 membrane-spanning stretches (helical) occupy residues 36 to 56 (FFLP…YLGL), 59 to 79 (FLPA…VTGG), 114 to 134 (GTIA…SLVL), 137 to 157 (YSIA…FLCL), 170 to 190 (IFIG…ILAL), and 199 to 219 (ATII…LLCL).

Belongs to the CobS family. The cofactor is Mg(2+).

It is found in the cell membrane. The catalysed reaction is alpha-ribazole + adenosylcob(III)inamide-GDP = adenosylcob(III)alamin + GMP + H(+). The enzyme catalyses alpha-ribazole 5'-phosphate + adenosylcob(III)inamide-GDP = adenosylcob(III)alamin 5'-phosphate + GMP + H(+). It functions in the pathway cofactor biosynthesis; adenosylcobalamin biosynthesis; adenosylcobalamin from cob(II)yrinate a,c-diamide: step 7/7. Functionally, joins adenosylcobinamide-GDP and alpha-ribazole to generate adenosylcobalamin (Ado-cobalamin). Also synthesizes adenosylcobalamin 5'-phosphate from adenosylcobinamide-GDP and alpha-ribazole 5'-phosphate. The sequence is that of Adenosylcobinamide-GDP ribazoletransferase from Clostridium botulinum (strain Kyoto / Type A2).